The chain runs to 359 residues: MLSLQNQRQPKTTPLTDDYVTSNTVLGYGINGKVVQCTHRRTQQNYALKVLLDSERARREVDLHWRVSGCRYIVNIIDVYENTFKDRKCLLVVMECMEGGELFQRIQDKADGAFTEREAAQIMHEICAAVDYLHSRDIAHRDLKPENLLYTTTQPNATLKLTDFGFAKETFTSYTLQTPCYTPYYVAPEVLGPEKYDKSCDIWSLGVVMYIIMCGFPPFYSNHGLAISPGMKNRIRTGQYDFPDPEWTNVSQAAKDLIKGMLNVDPSKRLRIQDVISNKWIAQYNAVPQTPLCTGRMLKEAEETWPEVQEEMTRSLATMRVDYDQMQIKALDKSNNPLLTKRRKKIEEMELYMANATRN.

Residues valine 20–isoleucine 281 form the Protein kinase domain. ATP is bound by residues leucine 26–valine 34 and lysine 49. The Proton acceptor role is filled by aspartate 142.

Belongs to the protein kinase superfamily. CAMK Ser/Thr protein kinase family. Post-translationally, phosphorylated and activated by MAP kinase.

The enzyme catalyses L-seryl-[protein] + ATP = O-phospho-L-seryl-[protein] + ADP + H(+). It catalyses the reaction L-threonyl-[protein] + ATP = O-phospho-L-threonyl-[protein] + ADP + H(+). In terms of biological role, its physiological substrate seems to be the small heat shock protein (HSP27/HSP25). The polypeptide is MAP kinase-activated protein kinase 2 (MAPk-Ak2) (Drosophila melanogaster (Fruit fly)).